A 720-amino-acid polypeptide reads, in one-letter code: B3 domain-containing transcription factor ABI3 (720 aa).

Disordered regions lie at residues arginine 122–alanine 146 and phenylalanine 324–glutamine 360. Positions threonine 129–alanine 146 are enriched in polar residues. The segment covering phenylalanine 324–aspartate 344 has biased composition (low complexity). Residues leucine 572–arginine 674 constitute a DNA-binding region (TF-B3). Positions glutamine 675–lysine 720 are disordered. Residues serine 687–isoleucine 700 are compositionally biased toward polar residues. The span at asparagine 701–proline 714 shows a compositional bias: low complexity.

As to quaternary structure, interacts (via C-terminus) with SPK1, SCAR3, ABI5, APRR1, AIP2, AIP3 and AIP4. Binds to BZIP10 and BZIP25 and forms complexes made of ABI3, BZIP53 and BZIP25 or BZIP10. In terms of processing, ubiquitinated by AIP2. Ubiquitination probably leads to its subsequent degradation, thus negatively regulating ABA signaling. As to expression, isoform 2 accumulates only at the end of seed maturation.

It localises to the nucleus. It is found in the cytoplasm. Functionally, participates in abscisic acid-regulated gene expression during seed development. Regulates the transcription of SGR1 and SGR2 that are involved in leaf and embryo degreening. This Arabidopsis thaliana (Mouse-ear cress) protein is B3 domain-containing transcription factor ABI3 (ABI3).